A 566-amino-acid chain; its full sequence is Membrane protein insertase YidC (566 aa).

5 helical membrane passes run 3 to 23 (IKRI…FNAW), 346 to 366 (GWLW…HAVV), 369 to 389 (WGWS…WFSA), 436 to 456 (GGCL…YVII), and 509 to 529 (MWIL…GLVL).

The protein belongs to the OXA1/ALB3/YidC family. Type 1 subfamily. In terms of assembly, interacts with the Sec translocase complex via SecD. Specifically interacts with transmembrane segments of nascent integral membrane proteins during membrane integration.

The protein resides in the cell inner membrane. Required for the insertion and/or proper folding and/or complex formation of integral membrane proteins into the membrane. Involved in integration of membrane proteins that insert both dependently and independently of the Sec translocase complex, as well as at least some lipoproteins. Aids folding of multispanning membrane proteins. This is Membrane protein insertase YidC from Coxiella burnetii (strain RSA 331 / Henzerling II).